Consider the following 152-residue polypeptide: Lipoprotein signal peptidase (152 aa).

The next 2 helical transmembrane spans lie at 55-75 (NKMWFFYIITVVFVVFIVFYM) and 85-105 (LGISLGLILGGAMGNFIDRVF). Catalysis depends on residues Asp-111 and Asp-129. The helical transmembrane segment at 124–144 (VFNIADSALCIGVVLIIIQTL) threads the bilayer.

The protein belongs to the peptidase A8 family.

It localises to the cell membrane. The enzyme catalyses Release of signal peptides from bacterial membrane prolipoproteins. Hydrolyzes -Xaa-Yaa-Zaa-|-(S,diacylglyceryl)Cys-, in which Xaa is hydrophobic (preferably Leu), and Yaa (Ala or Ser) and Zaa (Gly or Ala) have small, neutral side chains.. The protein operates within protein modification; lipoprotein biosynthesis (signal peptide cleavage). Its function is as follows. This protein specifically catalyzes the removal of signal peptides from prolipoproteins. The protein is Lipoprotein signal peptidase of Bacillus cereus (strain B4264).